A 274-amino-acid chain; its full sequence is Small ribosomal subunit protein uS3 (274 aa).

One can recognise a KH type-2 domain in the interval 38–106 (IRRLLSSGLE…QVQLNILEVK (69 aa)). A disordered region spans residues 215–274 (AAAAPAGADRPRRERPSGTRPRRSGASGTTATGTDAGRAAGGEEAAPDAAAPVEAQSTES). A compositionally biased stretch (low complexity) spans 238–266 (SGASGTTATGTDAGRAAGGEEAAPDAAAP).

The protein belongs to the universal ribosomal protein uS3 family. As to quaternary structure, part of the 30S ribosomal subunit. Forms a tight complex with proteins S10 and S14.

Functionally, binds the lower part of the 30S subunit head. Binds mRNA in the 70S ribosome, positioning it for translation. The sequence is that of Small ribosomal subunit protein uS3 from Mycobacterium tuberculosis (strain ATCC 25177 / H37Ra).